Reading from the N-terminus, the 1129-residue chain is Egg-laying defective protein 27 (1129 aa).

Positions 1 to 11 are enriched in polar residues; it reads MSRFDSQCSSE. A disordered region spans residues 1–43; sequence MSRFDSQCSSEDVNKEDECVPSSSEDSQDGVSSPMENDDEPEF. Positions 22–33 are enriched in low complexity; sequence SSSEDSQDGVSS. In terms of domain architecture, BAH spans 87 to 223; that stretch reads TLYRLRDSVF…QDSTKLASTH (137 aa). The 104-residue stretch at 224 to 327 folds into the ELM2 domain; sequence YAIRVGTSFQ…DALSELNAND (104 aa). The region spanning 332–384 is the SANT domain; sequence TDVDNMTQDDAKKFAKGIKQLGKNFSRIHRELLPHHSREQLVSYYYLWKKTPE. The disordered stretch occupies residues 388 to 434; the sequence is PKQAARRVNPTSIKRPTKEKVKASRPTSTEYLDFDSASESDVENNGP. Residues 419-429 show a composition bias toward acidic residues; the sequence is LDFDSASESDV. The segment at 439–485 adopts a GATA-type; atypical zinc-finger fold; it reads CHHCYGAESKDWHHANGLLLCTDCRLHYKKYGQLRQIANRPSQVPAC. Disordered stretches follow at residues 488 to 636, 693 to 717, 790 to 814, 899 to 950, and 982 to 1040; these read KRSN…DPMP, RDET…SPED, QQNQ…QQAQ, MIAE…HAAA, and MAAQ…REHA. Composition is skewed to polar residues over residues 525–545 and 561–573; these read PSTV…TKKL and VINN…SSEE. Acidic residues-rich tracts occupy residues 613–634 and 705–717; these read SYDD…DDDP and KDDE…SPED. Residues 899 to 914 are compositionally biased toward low complexity; the sequence is MIAEQQQQQRHAAAQQ. Residues 915-932 show a composition bias toward basic and acidic residues; that stretch reads LREREQREQRERERERQH. 2 stretches are compositionally biased toward low complexity: residues 933-950 and 983-999; these read QQQA…HAAA and AAQQ…AQAQ. Basic and acidic residues predominate over residues 1000 to 1040; the sequence is RDQERERREREAREREAAREREREQAAREAAARDQAAREHA.

Interacts with ceh-6, sem-4 and sox-2. Interacts with wdr-5.1. Expression detected in anterior intestine and head region.

Its subcellular location is the nucleus. Transcription factor which promotes stress survival and delays aging. Required for cell cycle progression and development of the mesodermal and endodermal embryonic lineages. Required for normal T-cell polarity, for correct migration of QL neuroblast descendants and other cells, for embryonic patterning and for the embryonic expression of hlh-8. Also required for the transdifferentiation of the Y rectal epithelial cell to the PDA motor neuron during larval development. This Caenorhabditis elegans protein is Egg-laying defective protein 27.